The following is a 675-amino-acid chain: L-type lectin-domain containing receptor kinase IV.1 (675 aa).

The N-terminal stretch at 1–22 (MFLKLLTIFFFFFFNLIFQSSS) is a signal peptide. Topologically, residues 23-291 (QSLNFAYNNG…EPKRISEFYK (269 aa)) are extracellular. A legume-lectin like region spans residues 25–261 (LNFAYNNGFN…SEHYILGWSF (237 aa)). N-linked (GlcNAc...) asparagine glycans are attached at residues Asn-57, Asn-79, Asn-112, Asn-134, Asn-153, and Asn-186. Residues 292–312 (IGMPLISLFLIFSFIFLVCYI) form a helical membrane-spanning segment. The Cytoplasmic portion of the chain corresponds to 313-675 (VRRRRKFAEE…IADSQLSGGR (363 aa)). The region spanning 347–624 (FKEKGLLGTG…LHYLRGDAKL (278 aa)) is the Protein kinase domain. Residues 353–361 (LGTGGFGSV) and Lys-376 each bind ATP. Asp-472 (proton acceptor) is an active-site residue.

In the C-terminal section; belongs to the protein kinase superfamily. Ser/Thr protein kinase family. This sequence in the N-terminal section; belongs to the leguminous lectin family.

It localises to the membrane. It carries out the reaction L-seryl-[protein] + ATP = O-phospho-L-seryl-[protein] + ADP + H(+). The catalysed reaction is L-threonyl-[protein] + ATP = O-phospho-L-threonyl-[protein] + ADP + H(+). This Arabidopsis thaliana (Mouse-ear cress) protein is L-type lectin-domain containing receptor kinase IV.1 (LECRK41).